We begin with the raw amino-acid sequence, 276 residues long: MKGQILREMKVQPAIEASYEVERRIAFIKLKLKESHTQTLVLGISGGVDSSLAGKLCQLAVEQLNEETSSELYQFIAVRLPYHVQKDEDEAQLACQFISPSKLVTVNIHDGVSGVHQETLSGLTSAGIEVCDSTKLDFVKGNVKARMRMIAQYEIAGLTGGLVVGTDHSAENITGFYTKWGDGACDLAPLFGLNKRQVRQLAAYLGAPAVLVEKAPTADLEEDKPQLEDEVALGLTYEQIDDFLEGKAVDSYVEDRLIGIYKATQHKREAIPTIYD.

43-50 (GISGGVDS) contacts ATP. Position 49 (D49) interacts with Mg(2+). R146 contacts deamido-NAD(+). T166 is an ATP binding site. E171 provides a ligand contact to Mg(2+). Positions 179 and 186 each coordinate deamido-NAD(+). ATP-binding residues include K195 and T217. Position 266 to 267 (266 to 267 (HK)) interacts with deamido-NAD(+).

It belongs to the NAD synthetase family. Homodimer.

It carries out the reaction deamido-NAD(+) + NH4(+) + ATP = AMP + diphosphate + NAD(+) + H(+). Its pathway is cofactor biosynthesis; NAD(+) biosynthesis; NAD(+) from deamido-NAD(+) (ammonia route): step 1/1. Its function is as follows. Catalyzes the ATP-dependent amidation of deamido-NAD to form NAD. Uses ammonia as a nitrogen source. This chain is NH(3)-dependent NAD(+) synthetase, found in Shewanella woodyi (strain ATCC 51908 / MS32).